Consider the following 49-residue polypeptide: Large ribosomal subunit protein bL34 (49 aa).

Belongs to the bacterial ribosomal protein bL34 family.

This chain is Large ribosomal subunit protein bL34, found in Sorangium cellulosum (strain So ce56) (Polyangium cellulosum (strain So ce56)).